The primary structure comprises 235 residues: Ribitol-5-phosphate cytidylyltransferase (235 aa).

CTP-binding positions include L7–G10, G82–S88, and S113.

Belongs to the IspD/TarI cytidylyltransferase family. TarI subfamily.

The enzyme catalyses D-ribitol 5-phosphate + CTP + H(+) = CDP-L-ribitol + diphosphate. It functions in the pathway cell wall biogenesis; poly(ribitol phosphate) teichoic acid biosynthesis. Catalyzes the transfer of the cytidylyl group of CTP to D-ribitol 5-phosphate. This Streptococcus pneumoniae (strain Hungary19A-6) protein is Ribitol-5-phosphate cytidylyltransferase.